A 359-amino-acid chain; its full sequence is Phospho-N-acetylmuramoyl-pentapeptide-transferase (359 aa).

The next 10 helical transmembrane spans lie at 27 to 47 (IGAA…FIRT), 71 to 91 (VPTM…LLWA), 93 to 113 (LDNP…MIGA), 134 to 154 (LLLQ…HPGY), 170 to 190 (LGWF…NAVN), 203 to 223 (MVVS…VVLA), 234 to 254 (SGEL…FLWF), 262 to 282 (FMGD…AIII), 286 to 306 (FLLA…MLQV), and 336 to 356 (KVVV…IATL).

It belongs to the glycosyltransferase 4 family. MraY subfamily. The cofactor is Mg(2+).

It localises to the cell inner membrane. It catalyses the reaction UDP-N-acetyl-alpha-D-muramoyl-L-alanyl-gamma-D-glutamyl-meso-2,6-diaminopimeloyl-D-alanyl-D-alanine + di-trans,octa-cis-undecaprenyl phosphate = di-trans,octa-cis-undecaprenyl diphospho-N-acetyl-alpha-D-muramoyl-L-alanyl-D-glutamyl-meso-2,6-diaminopimeloyl-D-alanyl-D-alanine + UMP. The protein operates within cell wall biogenesis; peptidoglycan biosynthesis. Functionally, catalyzes the initial step of the lipid cycle reactions in the biosynthesis of the cell wall peptidoglycan: transfers peptidoglycan precursor phospho-MurNAc-pentapeptide from UDP-MurNAc-pentapeptide onto the lipid carrier undecaprenyl phosphate, yielding undecaprenyl-pyrophosphoryl-MurNAc-pentapeptide, known as lipid I. In Desulfotalea psychrophila (strain LSv54 / DSM 12343), this protein is Phospho-N-acetylmuramoyl-pentapeptide-transferase.